A 384-amino-acid chain; its full sequence is 1-deoxy-D-xylulose 5-phosphate reductoisomerase (384 aa).

6 residues coordinate NADPH: Thr-10, Gly-11, Ser-12, Ile-13, Gly-36, and Asn-123. A 1-deoxy-D-xylulose 5-phosphate-binding site is contributed by Lys-124. Glu-125 contributes to the NADPH binding site. Asp-149 is a Mn(2+) binding site. Positions 150, 151, 175, and 198 each coordinate 1-deoxy-D-xylulose 5-phosphate. Glu-151 contributes to the Mn(2+) binding site. Gly-204 is a binding site for NADPH. 1-deoxy-D-xylulose 5-phosphate contacts are provided by Ser-211, Asn-216, Lys-217, and Glu-220. Position 220 (Glu-220) interacts with Mn(2+).

It belongs to the DXR family. Mg(2+) serves as cofactor. Mn(2+) is required as a cofactor.

It carries out the reaction 2-C-methyl-D-erythritol 4-phosphate + NADP(+) = 1-deoxy-D-xylulose 5-phosphate + NADPH + H(+). It functions in the pathway isoprenoid biosynthesis; isopentenyl diphosphate biosynthesis via DXP pathway; isopentenyl diphosphate from 1-deoxy-D-xylulose 5-phosphate: step 1/6. In terms of biological role, catalyzes the NADPH-dependent rearrangement and reduction of 1-deoxy-D-xylulose-5-phosphate (DXP) to 2-C-methyl-D-erythritol 4-phosphate (MEP). This chain is 1-deoxy-D-xylulose 5-phosphate reductoisomerase, found in Chlorobium phaeovibrioides (strain DSM 265 / 1930) (Prosthecochloris vibrioformis (strain DSM 265)).